We begin with the raw amino-acid sequence, 364 residues long: Putative protein C31H2.4 (364 aa).

2 consecutive VOC domains span residues 6–134 (AIHH…LGEF) and 161–320 (LMDH…IFSK). Fe cation is bound by residues His-164, His-248, and Glu-331.

The protein belongs to the 4HPPD family. Requires Fe cation as cofactor.

The protein is Putative protein C31H2.4 of Caenorhabditis elegans.